The primary structure comprises 362 residues: Sulfoquinovose monooxygenase (362 aa).

It belongs to the SsuD family.

It carries out the reaction 6-sulfo-D-quinovose + FMNH2 + O2 = 6-dehydro-D-glucose + FMN + sulfite + H2O + 2 H(+). Part of the alkanesulfonate monooxygenase (sulfo-ASMO) pathway, a D-sulfoquinovose degradation pathway that enables the complete utilization of all carbons within sulfoquinovose (SQ) with concomitant production of inorganic sulfite. Catalyzes the oxidative desulfurization of sulfoquinovose to sulfite and 6-dehydro-D-glucose. This is Sulfoquinovose monooxygenase from Novosphingobium aromaticivorans (strain ATCC 700278 / DSM 12444 / CCUG 56034 / CIP 105152 / NBRC 16084 / F199).